A 555-amino-acid polypeptide reads, in one-letter code: Potassium-transporting ATPase potassium-binding subunit (555 aa).

The next 10 helical transmembrane spans lie at 2–22 (IWVA…PTGI), 60–80 (QYAL…YFIF), 130–150 (IGIT…VMAF), 173–193 (VFLP…VPQT), 246–266 (MSNI…PFTY), 278–298 (ILFV…TTSE), 374–394 (AGFV…GLMV), 412–432 (LIAV…ALAL), 483–503 (LVMF…AASL), and 525–545 (GIFI…MLVL).

This sequence belongs to the KdpA family. In terms of assembly, the system is composed of three essential subunits: KdpA, KdpB and KdpC.

It localises to the cell membrane. Part of the high-affinity ATP-driven potassium transport (or Kdp) system, which catalyzes the hydrolysis of ATP coupled with the electrogenic transport of potassium into the cytoplasm. This subunit binds the extracellular potassium ions and delivers the ions to the membrane domain of KdpB through an intramembrane tunnel. The protein is Potassium-transporting ATPase potassium-binding subunit of Bacillus thuringiensis (strain Al Hakam).